Consider the following 180-residue polypeptide: MDVTAEAKQIMVQALGKMYSSRSQRGGLRLHRSLLLTLVMKSARDIYHSARLMSEKSGQSVTEECTSHTQEPMDTSSSTATPLRETSGQSSEDGQRSGLEGHPHPLNPAADKENCGPSRPDRHSRKRRSKTATDSDFIPCKKAKLECAEVRGVLQNSSANCGRALDSLSLVPMPRTIVTF.

The segment at 53-135 (MSEKSGQSVT…KRRSKTATDS (83 aa)) is disordered. Positions 56-92 (KSGQSVTEECTSHTQEPMDTSSSTATPLRETSGQSSE) are enriched in polar residues. Residues 93 to 103 (DGQRSGLEGHP) are compositionally biased toward basic and acidic residues.

This sequence belongs to the IER family. In terms of assembly, interacts with FIBPB.

The protein resides in the nucleus. It localises to the cytoplasm. Functionally, DNA-binding protein that seems to act as a transcription factor. Mediates with FIBPB FGF-signaling in Kupffer's vesicle ciliogenesis and in the establishment of laterality in the embryo. The sequence is that of Immediate early response gene 2 protein from Danio rerio (Zebrafish).